The chain runs to 213 residues: Ribonuclease Oy (213 aa).

His-35 is an active-site residue. A disulfide bond links Cys-51 and Cys-96. Residue Asn-52 is glycosylated (N-linked (GlcNAc...) asparagine). Catalysis depends on residues Glu-89 and His-93. N-linked (GlcNAc...) asparagine glycans are attached at residues Asn-121 and Asn-142. 2 cysteine pairs are disulfide-bonded: Cys-160–Cys-198 and Cys-178–Cys-188.

This sequence belongs to the RNase T2 family.

Its subcellular location is the secreted. Releases mononucleotides from RNA in the order of 3'-GMP, 3'-AMP and 3'-UMP. The sequence is that of Ribonuclease Oy from Magallana gigas (Pacific oyster).